A 444-amino-acid chain; its full sequence is Cell wall mannoprotein PST1 (444 aa).

Positions 1–19 (MQLHSLIASTALLITSALA) are cleaved as a signal peptide. Asparagine 57, asparagine 76, asparagine 83, asparagine 86, asparagine 196, asparagine 210, asparagine 228, asparagine 235, asparagine 242, asparagine 263, asparagine 268, asparagine 280, asparagine 292, asparagine 305, and asparagine 329 each carry an N-linked (GlcNAc...) asparagine glycan. Composition is skewed to low complexity over residues 359–381 (SVKLSSTSKSQSSQTTAKVSKSS) and 395–418 (KAAASASSVSSSGASSSSSKSSKG). The tract at residues 359-418 (SVKLSSTSKSQSSQTTAKVSKSSSKAEEKKFTSGDIKAAASASSVSSSGASSSSSKSSKG) is disordered. The GPI-anchor amidated asparagine moiety is linked to residue asparagine 419. Positions 420 to 444 (AAIMAPIGQTTPLVGLLTAIIMSIM) are cleaved as a propeptide — removed in mature form.

Belongs to the SPS2 family. In terms of processing, extensively N- and O-mannosylated.

It localises to the cell membrane. Its subcellular location is the secreted. The protein resides in the cell wall. In terms of biological role, has a partially redundant function to ECM33 in cell wall integrity. May be involved in a repair mechanism activated in response to cell wall damage. The sequence is that of Cell wall mannoprotein PST1 (PST1) from Saccharomyces cerevisiae (strain ATCC 204508 / S288c) (Baker's yeast).